The chain runs to 232 residues: Protein shisa-3 (232 aa).

Positions 1 to 19 are cleaved as a signal peptide; that stretch reads MRLLGCFFLIFLTWGSARA. Residues 20 to 93 are Lumenal-facing; the sequence is QGEYCHGWLD…GVSAQPVYVP (74 aa). A helical transmembrane segment spans residues 94–114; sequence FLIVGSIFIAFIIVGSLVAVY. At 115-232 the chain is on the cytoplasmic side; sequence CCTCLRPKQT…NKSCPDFRQS (118 aa). Residues 146–185 form a disordered region; that stretch reads TSGNLRTPSRQSSTATSSTSTGGSVRRLSSSRADPGYLVS. Positions 151–177 are enriched in low complexity; the sequence is RTPSRQSSTATSSTSTGGSVRRLSSSR.

The protein belongs to the shisa family. In terms of assembly, interacts with fzd8 and fgfr1.

The protein resides in the endoplasmic reticulum membrane. In terms of biological role, plays an essential role in the maturation of presomitic mesoderm cells by individual attenuation of both fgf and wnt signaling. Regulates head and somite developmen. Inhibits both wnt and fgf signaling through the regulation of protein maturation and cell surface transportation of their receptors within the endoplasmic reticulum. This is Protein shisa-3 (shisa3) from Xenopus laevis (African clawed frog).